We begin with the raw amino-acid sequence, 349 residues long: tRNA pseudouridine synthase D (349 aa).

Phe-27 is a substrate binding site. Asp-80 (nucleophile) is an active-site residue. Asn-129 lines the substrate pocket. Residues 155 to 303 form the TRUD domain; that stretch reads GVPNYFGAQR…VEAARRAMLL (149 aa). Residue Phe-329 participates in substrate binding.

This sequence belongs to the pseudouridine synthase TruD family.

The catalysed reaction is uridine(13) in tRNA = pseudouridine(13) in tRNA. Responsible for synthesis of pseudouridine from uracil-13 in transfer RNAs. The protein is tRNA pseudouridine synthase D of Escherichia fergusonii (strain ATCC 35469 / DSM 13698 / CCUG 18766 / IAM 14443 / JCM 21226 / LMG 7866 / NBRC 102419 / NCTC 12128 / CDC 0568-73).